The chain runs to 132 residues: Small ribosomal subunit protein uS8 (132 aa).

It belongs to the universal ribosomal protein uS8 family. Part of the 30S ribosomal subunit. Contacts proteins S5 and S12.

One of the primary rRNA binding proteins, it binds directly to 16S rRNA central domain where it helps coordinate assembly of the platform of the 30S subunit. The chain is Small ribosomal subunit protein uS8 from Streptococcus uberis (strain ATCC BAA-854 / 0140J).